The following is an 822-amino-acid chain: Pentatricopeptide repeat-containing protein At2g18940, chloroplastic (822 aa).

The tract at residues 1-42 (MDGALFPHKPPYPIQSKRPPPSQSSNQSIKFSSATLHLPPPS) is disordered. A chloroplast-targeting transit peptide spans 1 to 77 (MDGALFPHKP…SAAARFPSLE (77 aa)). A compositionally biased stretch (pro residues) spans 8 to 22 (HKPPYPIQSKRPPPS). The segment covering 23–37 (QSSNQSIKFSSATLH) has biased composition (low complexity). PPR repeat units follow at residues 209–243 (DVRA…GPSP), 244–279 (TLVT…GLKF), 280–314 (DEFT…GYEP), 315–349 (GTVT…SCPA), 350–384 (DSVT…GVMP), 385–419 (NAIT…GCVP), 420–454 (NTCT…GCSP), 455–489 (NRAT…GFEP), 490–524 (DRDT…GFNA), 525–559 (CVTT…GFKP), 560–594 (TETS…QIFP), 595–629 (SWML…GYKP), 630–664 (DMVI…GLSP), 665–699 (DLVT…QLKP), 700–734 (DLVS…GIRP), 735–769 (CIFT…DCRP), and 770–800 (NELT…IKTF).

The protein belongs to the PPR family. P subfamily.

It localises to the plastid. Its subcellular location is the chloroplast. This Arabidopsis thaliana (Mouse-ear cress) protein is Pentatricopeptide repeat-containing protein At2g18940, chloroplastic.